A 412-amino-acid polypeptide reads, in one-letter code: Serine hydroxymethyltransferase (412 aa).

Residues L120 and 124–126 each bind (6S)-5,6,7,8-tetrahydrofolate; that span reads GHL. The residue at position 228 (K228) is an N6-(pyridoxal phosphate)lysine. (6S)-5,6,7,8-tetrahydrofolate is bound at residue 353-355; the sequence is SPF.

This sequence belongs to the SHMT family. In terms of assembly, homodimer. Pyridoxal 5'-phosphate serves as cofactor.

It localises to the cytoplasm. The catalysed reaction is (6R)-5,10-methylene-5,6,7,8-tetrahydrofolate + glycine + H2O = (6S)-5,6,7,8-tetrahydrofolate + L-serine. Its pathway is one-carbon metabolism; tetrahydrofolate interconversion. It participates in amino-acid biosynthesis; glycine biosynthesis; glycine from L-serine: step 1/1. Catalyzes the reversible interconversion of serine and glycine with tetrahydrofolate (THF) serving as the one-carbon carrier. This reaction serves as the major source of one-carbon groups required for the biosynthesis of purines, thymidylate, methionine, and other important biomolecules. Also exhibits THF-independent aldolase activity toward beta-hydroxyamino acids, producing glycine and aldehydes, via a retro-aldol mechanism. The protein is Serine hydroxymethyltransferase of Lachnoclostridium phytofermentans (strain ATCC 700394 / DSM 18823 / ISDg) (Clostridium phytofermentans).